The chain runs to 342 residues: Oxygen-dependent coproporphyrinogen-III oxidase (342 aa).

Ser-98 serves as a coordination point for substrate. His-102 and His-112 together coordinate a divalent metal cation. The Proton donor role is filled by His-112. 114–116 (NYR) is a binding site for substrate. The a divalent metal cation site is built by His-146 and His-176. The important for dimerization stretch occupies residues 266–301 (YVEFNLVWDRGTIFGLQTNGRTESILMSLPPLARWE).

Belongs to the aerobic coproporphyrinogen-III oxidase family. In terms of assembly, homodimer. Requires a divalent metal cation as cofactor.

It localises to the cytoplasm. It catalyses the reaction coproporphyrinogen III + O2 + 2 H(+) = protoporphyrinogen IX + 2 CO2 + 2 H2O. It participates in porphyrin-containing compound metabolism; protoporphyrin-IX biosynthesis; protoporphyrinogen-IX from coproporphyrinogen-III (O2 route): step 1/1. Functionally, involved in the heme and chlorophyll biosynthesis. Catalyzes the aerobic oxidative decarboxylation of propionate groups of rings A and B of coproporphyrinogen-III to yield the vinyl groups in protoporphyrinogen-IX. In Prochlorococcus marinus (strain MIT 9312), this protein is Oxygen-dependent coproporphyrinogen-III oxidase.